A 23-amino-acid polypeptide reads, in one-letter code: M-poneritoxin-Nc1a (23 aa).

It belongs to the non-disulfide-bridged peptide (NDBP) superfamily. Medium-length antimicrobial peptide (group 3) family. Ponericin-W subfamily. Expressed by the venom gland.

The protein localises to the secreted. The protein resides in the target cell membrane. Its function is as follows. Membrane-perturbating peptide with multiple activities. It is insecticidal, since it induces contractile paralysis in insects (L.cuprina) during several hours, and death after 24 hours. It shows antibacterial activity with higher activity against Gram-positive than Gram-negative bacteria. It is also antiparasitic, since it potently inhibits the larval development of the major pathogenic nematode of ruminants (H.contortus, IC(50)=5.1 uM), but fails to reduce the motility of adult males of the other nematode B.malayi. It also shows cytotoxic activity against HEK293 cells (EC(50)=12-14 uM) and induces hemolysis in human erythrocytes (EC(50)=28.6-48.2 uM). In addition, it causes an important increase in intracellular calcium concentration on neuronal and epithelial cell lines, which supports a non-specific membrane perturbation mechanism of action. In vivo, it induces pain by intraplantar injection into mice, suggesting a defensive function against vertebrate predators. This Neoponera commutata (Large hunting ant) protein is M-poneritoxin-Nc1a.